The primary structure comprises 353 residues: Protein Wnt-11b (353 aa).

A signal peptide spans 1–22 (MAPTRHWVTPLLLLCCSGICGA). 3 N-linked (GlcNAc...) asparagine glycosylation sites follow: Asn31, Asn38, and Asn88. 5 disulfide bridges follow: Cys78–Cys89, Cys128–Cys136, Cys138–Cys155, Cys208–Cys222, and Cys210–Cys217. The O-palmitoleoyl serine; by PORCN moiety is linked to residue Ser214. Sulfotyrosine is present on residues Tyr274 and Tyr281. Cystine bridges form between Cys282-Cys313, Cys298-Cys308, Cys312-Cys352, Cys328-Cys343, Cys330-Cys340, and Cys335-Cys336. N-linked (GlcNAc...) asparagine glycosylation is present at Asn299.

This sequence belongs to the Wnt family. In terms of assembly, homodimer. Secreted homodimers form a complex with wnt5a homodimers; tyrosine sulfation of both wnt11 and wnt5a by tpst1 is required for this interaction. Interacts with the transmembrane receptor fzd7/fz7. Interacts with lrp6 and ryk. Interacts with tdgf1/frl1. Interacts weakly with frzb1 and strongly with frzb2/crescent. Interaction with frzb2/crescent antagonizes wnt11 function in the neuroectoderm, but enhances it in mesodermal tissue. In terms of processing, glycosylation is required for protein secretion. Post-translationally, palmitoleoylation is required for efficient binding to frizzled receptors. Depalmitoleoylation leads to Wnt signaling pathway inhibition. In terms of tissue distribution, transcripts are expressed ubiquitously in early oocytes but become vegetally localized during mid-oogenesis then enriched on the dorsal side by the 8 to 16 cell stage. The protein becomes asymmetrically concentrated on the dorsal side by the 64-cell stage. During gastrulation, expressed in the lateral and ventral marginal zone, and during tadpole stages in the somites and first branchial arch. Weakly expressed in the pronephros from at least stage 12.5, with kidney expression increasing until stage 35. Expressed in the prospective posterior gut between stages 13 and 20, and in the deep foregut endoderm. Prior to neural crest cell migration, expressed in a domain flanking the neural crest on the lateral or epidermal side (the opposite side to wnt11/wnt11-r).

The protein localises to the secreted. It is found in the extracellular space. Its subcellular location is the extracellular matrix. Functionally, ligand for the frizzled7 transmembrane receptor. Primarily acts via non-canonical Wnt pathways mediated by either Ca(2+) and PKC, or by JNK and dvl2/dsh. Depending on the cellular context, can also signal via the canonical Wnt pathway mediated by beta-catenin and dvl2/dsh. May also inhibit canonical Wnt signaling. Maternally initiates dorsal/ventral axis formation by a canonical route, which signals via lrp6. In a complex with wnt5a, activates the canonical and non-canonical processes involved in axis formation. In the non-canonical pathway, acts through fzd7/fz7 to induce phosphorylation of dvl2/dsh. Signals through a non-canonical Wnt pathway to regulate convergent extension movements during gastrulation. Interactions with the secreted Wnt antagonist sfrp5 to coordinate foregut development, acting via a non-canonical Wnt pathway whereby sfrp5 restricts wnt11b activity to prevent inappropriate foregut formation. Mediates cardiogenesis via non-canonical Wnt signaling involving JNK-activation and PKC. Acts redundantly with wnt11/wnt11r during pronephros induction. This Xenopus laevis (African clawed frog) protein is Protein Wnt-11b (wnt11b).